The chain runs to 485 residues: NADH-quinone oxidoreductase subunit N (485 aa).

Helical transmembrane passes span 3 to 23 (LFMP…TDLF), 30 to 50 (HLAY…VLNW), 67 to 87 (YASF…MASV), 96 to 116 (FQGE…MMAS), 120 to 140 (LITM…LVGF), 154 to 174 (LLLG…IYGF), 202 to 222 (FILG…AVPF), 247 to 267 (AAGF…PLAL), 271 to 291 (WALI…VLAI), 299 to 319 (MLGY…AAVG), 332 to 352 (LFYL…IIAI), 375 to 395 (ASAL…AGFL), 411 to 431 (WLMI…FNVI), and 453 to 473 (LALG…ETLL).

The protein belongs to the complex I subunit 2 family. NDH-1 is composed of 14 different subunits. Subunits NuoA, H, J, K, L, M, N constitute the membrane sector of the complex.

The protein localises to the cell membrane. The catalysed reaction is a quinone + NADH + 5 H(+)(in) = a quinol + NAD(+) + 4 H(+)(out). Functionally, NDH-1 shuttles electrons from NADH, via FMN and iron-sulfur (Fe-S) centers, to quinones in the respiratory chain. The immediate electron acceptor for the enzyme in this species is believed to be ubiquinone. Couples the redox reaction to proton translocation (for every two electrons transferred, four hydrogen ions are translocated across the cytoplasmic membrane), and thus conserves the redox energy in a proton gradient. The protein is NADH-quinone oxidoreductase subunit N of Dehalococcoides mccartyi (strain ATCC BAA-2100 / JCM 16839 / KCTC 5957 / BAV1).